A 244-amino-acid chain; its full sequence is Krueppel-like factor 9 (244 aa).

2 disordered regions span residues 24–51 (VPEH…GDPG) and 80–142 (SVCS…SEKR). Positions 32-51 (DAERLRLPEREVTKEHGDPG) are enriched in basic and acidic residues. Ser122 bears the Phosphoserine mark. C2H2-type zinc fingers lie at residues 143–167 (HKCP…YRVH), 173–197 (FPCT…YRTH), and 203–225 (FRCP…ARRH).

It belongs to the Sp1 C2H2-type zinc-finger protein family. In terms of assembly, interacts with ZZEF1.

It localises to the nucleus. Transcription factor that binds to GC box promoter elements. Selectively activates mRNA synthesis from genes containing tandem repeats of GC boxes but represses genes with a single GC box. Acts as an epidermal circadian transcription factor regulating keratinocyte proliferation. This is Krueppel-like factor 9 (KLF9) from Sus scrofa (Pig).